Consider the following 642-residue polypeptide: Poly(A) polymerase beta (642 aa).

ATP-binding positions include 101–103 (FGS), Thr110, 114–116 (DID), Asp168, Lys229, Tyr238, and 247–248 (GV). The Mg(2+) site is built by Asp114, Asp116, and Asp168. Disordered stretches follow at residues 530–553 (SENSMTAPSPTGTMKTGPLTGNPQ) and 620–642 (LVNHPSRPSGNTATNIPNPILGV). Residues 620–636 (LVNHPSRPSGNTATNIP) show a composition bias toward polar residues.

This sequence belongs to the poly(A) polymerase family. Interacts with GSG1. It depends on Mg(2+) as a cofactor. Requires Mn(2+) as cofactor. Testis specific.

The protein resides in the cytoplasm. The protein localises to the nucleus. It carries out the reaction RNA(n) + ATP = RNA(n)-3'-adenine ribonucleotide + diphosphate. The chain is Poly(A) polymerase beta from Mus musculus (Mouse).